Here is a 287-residue protein sequence, read N- to C-terminus: Inositol-1-monophosphatase (287 aa).

Residues Glu-79, Asp-96, Leu-98, and Asp-99 each coordinate Mg(2+). Glu-79 is a substrate binding site. Substrate contacts are provided by residues Leu-98–Thr-101, Arg-195, and Asp-224. Asp-224 lines the Mg(2+) pocket.

The protein belongs to the inositol monophosphatase superfamily. The cofactor is Mg(2+).

It carries out the reaction a myo-inositol phosphate + H2O = myo-inositol + phosphate. This chain is Inositol-1-monophosphatase (suhB), found in Synechocystis sp. (strain ATCC 27184 / PCC 6803 / Kazusa).